The following is a 57-amino-acid chain: Large ribosomal subunit protein bL32 (57 aa).

The segment covering 1-19 (MAVPKRRMSRANTRSRRAQ) has biased composition (basic residues). Residues 1–20 (MAVPKRRMSRANTRSRRAQW) are disordered.

The protein belongs to the bacterial ribosomal protein bL32 family.

The sequence is that of Large ribosomal subunit protein bL32 from Mycobacterium avium (strain 104).